The chain runs to 289 residues: Somatostatin-like receptor F_48D10.1 (289 aa).

Topologically, residues 1–57 (MEPLDQTPGFPLSPEPNYWYETTPSLLLVSYPHLLDISSNQSTQSVPFQGSSALLTA) are extracellular. An N-linked (GlcNAc...) asparagine glycan is attached at asparagine 40. A helical transmembrane segment spans residues 58-79 (VIYITVFVVGLTGNTLAIYVVL). The Cytoplasmic portion of the chain corresponds to 80–89 (RYAGMKTVTN). A helical transmembrane segment spans residues 90–110 (IYILNLAVADELYIVGLPFLA). Residues 111–126 (TQNVLSYWPFGSFLCR) are Extracellular-facing. Cysteine 125 and cysteine 221 form a disulfide bridge. A helical membrane pass occupies residues 127–148 (VVMTADSMNQFTSIFCLTVMSI). The Cytoplasmic segment spans residues 149-170 (DRYLAVVHPIRSTKWRHPRVAK). A helical transmembrane segment spans residues 171-191 (VVSAAVWAVSFVVVLPVVIFS). At 192–240 (DVQVRPSRPLQVGTSSKCLVKRVQETFNSCNMIWPEPKNVWSTAFILYT) the chain is on the extracellular side. A helical membrane pass occupies residues 241–261 (AMVGFFGPLLIICLCYLLIVI). Over 262-289 (KVRHRMSAAQVGAVVSTCPLNICCLSRR) the chain is Cytoplasmic.

This sequence belongs to the G-protein coupled receptor 1 family.

Its subcellular location is the cell membrane. This chain is Somatostatin-like receptor F_48D10.1, found in Takifugu rubripes (Japanese pufferfish).